The following is a 188-amino-acid chain: Josephin-2 (188 aa).

A Josephin domain is found at 11–188 (PPTVYHERQR…EEKGSWLRTD (178 aa)). Cysteine 24 functions as the Nucleophile in the catalytic mechanism. Catalysis depends on histidine 125, which acts as the Proton acceptor.

Its subcellular location is the cytoplasm. The protein localises to the cytosol. It catalyses the reaction Thiol-dependent hydrolysis of ester, thioester, amide, peptide and isopeptide bonds formed by the C-terminal Gly of ubiquitin (a 76-residue protein attached to proteins as an intracellular targeting signal).. Cleaves 'Lys-63'-linked poly-ubiquitin chains, and with lesser efficiency 'Lys-48'-linked poly-ubiquitin chains (in vitro). May act as a deubiquitinating enzyme. The protein is Josephin-2 (JOSD2) of Homo sapiens (Human).